The sequence spans 248 residues: 3-deoxy-manno-octulosonate cytidylyltransferase (248 aa).

This sequence belongs to the KdsB family.

The protein resides in the cytoplasm. It catalyses the reaction 3-deoxy-alpha-D-manno-oct-2-ulosonate + CTP = CMP-3-deoxy-beta-D-manno-octulosonate + diphosphate. It functions in the pathway nucleotide-sugar biosynthesis; CMP-3-deoxy-D-manno-octulosonate biosynthesis; CMP-3-deoxy-D-manno-octulosonate from 3-deoxy-D-manno-octulosonate and CTP: step 1/1. Its pathway is bacterial outer membrane biogenesis; lipopolysaccharide biosynthesis. Activates KDO (a required 8-carbon sugar) for incorporation into bacterial lipopolysaccharide in Gram-negative bacteria. The protein is 3-deoxy-manno-octulosonate cytidylyltransferase of Salmonella typhi.